The chain runs to 147 residues: UPF0178 protein AFE_3267 (147 aa).

The protein belongs to the UPF0178 family.

The polypeptide is UPF0178 protein AFE_3267 (Acidithiobacillus ferrooxidans (strain ATCC 23270 / DSM 14882 / CIP 104768 / NCIMB 8455) (Ferrobacillus ferrooxidans (strain ATCC 23270))).